The sequence spans 426 residues: Ubiquitin carboxyl-terminal hydrolase 46 (426 aa).

Residue G2 is the site of N-myristoyl glycine attachment. Residues 27-406 (YGLVNFGNTC…SAYILFYQAR (380 aa)) form the USP domain. The active-site Nucleophile is C36. Residues 162–181 (TAGLPRSDEKGTSERNGGIT) are disordered. The Proton acceptor role is filled by H342.

Belongs to the peptidase C19 family. In terms of assembly, interacts with wdr-20 and wdr-48; the catalytic activity of usp-46 is increased in the presence of both wdr-20 and wdr-48. Interacts with glr-1; the interaction results in deubiquitination of glr-1. Expressed in a number of tissues including the nervous system, pharynx, body wall muscle, vulva muscle and intestine and is detected in many head and ventral cord neurons.

It localises to the perikaryon. The protein localises to the cytoplasm. It catalyses the reaction Thiol-dependent hydrolysis of ester, thioester, amide, peptide and isopeptide bonds formed by the C-terminal Gly of ubiquitin (a 76-residue protein attached to proteins as an intracellular targeting signal).. Regulates the abundance of the glr-1 glutamate receptor in the ventral nerve cord by promoting its deubiquitination and preventing its degradation in the lysosome. Contributes to the regulation of embryonic polarity. This chain is Ubiquitin carboxyl-terminal hydrolase 46 (usp-46), found in Caenorhabditis elegans.